The sequence spans 86 residues: Small ribosomal subunit protein bS16 (86 aa).

This sequence belongs to the bacterial ribosomal protein bS16 family.

The sequence is that of Small ribosomal subunit protein bS16 from Xylella fastidiosa (strain M23).